Here is a 261-residue protein sequence, read N- to C-terminus: 1-(5-phosphoribosyl)-5-[(5-phosphoribosylamino)methylideneamino] imidazole-4-carboxamide isomerase (261 aa).

The Proton acceptor role is filled by D8. D130 (proton donor) is an active-site residue.

The protein belongs to the HisA/HisF family.

The protein resides in the cytoplasm. The enzyme catalyses 1-(5-phospho-beta-D-ribosyl)-5-[(5-phospho-beta-D-ribosylamino)methylideneamino]imidazole-4-carboxamide = 5-[(5-phospho-1-deoxy-D-ribulos-1-ylimino)methylamino]-1-(5-phospho-beta-D-ribosyl)imidazole-4-carboxamide. It participates in amino-acid biosynthesis; L-histidine biosynthesis; L-histidine from 5-phospho-alpha-D-ribose 1-diphosphate: step 4/9. This is 1-(5-phosphoribosyl)-5-[(5-phosphoribosylamino)methylideneamino] imidazole-4-carboxamide isomerase from Prosthecochloris aestuarii (strain DSM 271 / SK 413).